Reading from the N-terminus, the 224-residue chain is UPF0758 protein Hhal_2301 (224 aa).

One can recognise an MPN domain in the interval 102 to 224 (TLSSPAQTRT…PVSLAERGVL (123 aa)). Zn(2+)-binding residues include histidine 173, histidine 175, and aspartate 186. The JAMM motif signature appears at 173–186 (HNHPSGITEPSAAD).

It belongs to the UPF0758 family.

The chain is UPF0758 protein Hhal_2301 from Halorhodospira halophila (strain DSM 244 / SL1) (Ectothiorhodospira halophila (strain DSM 244 / SL1)).